We begin with the raw amino-acid sequence, 264 residues long: Hemin import ATP-binding protein HmuV (264 aa).

The region spanning 2-241 (IEVSGVSVRL…ETMLAVFGCA (240 aa)) is the ABC transporter domain. 34–41 (GPNGSGKT) contributes to the ATP binding site.

Belongs to the ABC transporter superfamily. Heme (hemin) importer (TC 3.A.1.14.5) family. In terms of assembly, the complex is composed of two ATP-binding proteins (HmuV), two transmembrane proteins (HmuU) and a solute-binding protein (HmuT).

Its subcellular location is the cell inner membrane. Functionally, part of the ABC transporter complex HmuTUV involved in hemin import. Responsible for energy coupling to the transport system. This is Hemin import ATP-binding protein HmuV from Rhizobium johnstonii (strain DSM 114642 / LMG 32736 / 3841) (Rhizobium leguminosarum bv. viciae).